The primary structure comprises 468 residues: UDP-N-acetylmuramoyl-L-alanine--L-glutamate ligase (468 aa).

122–128 lines the ATP pocket; the sequence is GTKGKST.

Belongs to the MurCDEF family. MurD2 subfamily.

The protein resides in the cytoplasm. The catalysed reaction is UDP-N-acetyl-alpha-D-muramoyl-L-alanine + L-glutamate + ATP = UDP-N-acetyl-alpha-D-muramoyl-L-alanyl-L-glutamate + ADP + phosphate + H(+). It participates in cell wall biogenesis; peptidoglycan biosynthesis. In terms of biological role, cell wall formation. Catalyzes the addition of L-glutamate to the nucleotide precursor UDP-N-acetylmuramoyl-L-alanine. The sequence is that of UDP-N-acetylmuramoyl-L-alanine--L-glutamate ligase from Xylella fastidiosa (strain Temecula1 / ATCC 700964).